Reading from the N-terminus, the 239-residue chain is LexA repressor (239 aa).

A DNA-binding region (H-T-H motif) is located at residues 26–46 (FDEMKDALDLASKSGIHRLIT). Residues 84 to 107 (SPSVIEGSLGKPQPVATPAPAKSV) form a disordered region. Catalysis depends on for autocatalytic cleavage activity residues S159 and K197.

Belongs to the peptidase S24 family. Homodimer.

It carries out the reaction Hydrolysis of Ala-|-Gly bond in repressor LexA.. In terms of biological role, represses a number of genes involved in the response to DNA damage (SOS response), including recA and lexA. In the presence of single-stranded DNA, RecA interacts with LexA causing an autocatalytic cleavage which disrupts the DNA-binding part of LexA, leading to derepression of the SOS regulon and eventually DNA repair. The chain is LexA repressor from Rhizobium johnstonii (strain DSM 114642 / LMG 32736 / 3841) (Rhizobium leguminosarum bv. viciae).